We begin with the raw amino-acid sequence, 136 residues long: uncharacterized protein (136 aa).

Its subcellular location is the cytoplasm. It is found in the nucleus. This is an uncharacterized protein from Schizosaccharomyces pombe (strain 972 / ATCC 24843) (Fission yeast).